Here is a 360-residue protein sequence, read N- to C-terminus: Dihydroorotate dehydrogenase (quinone) (360 aa).

Residues 66 to 70 (AGFDK) and threonine 90 contribute to the FMN site. Lysine 70 provides a ligand contact to substrate. A substrate-binding site is contributed by 115 to 119 (NRMGF). FMN is bound by residues asparagine 143 and asparagine 176. Substrate is bound at residue asparagine 176. Serine 179 serves as the catalytic Nucleophile. Asparagine 181 serves as a coordination point for substrate. Residues lysine 212 and threonine 240 each contribute to the FMN site. 241–242 (NT) contacts substrate. Residues glycine 264, glycine 293, and 314-315 (YT) each bind FMN.

This sequence belongs to the dihydroorotate dehydrogenase family. Type 2 subfamily. As to quaternary structure, monomer. FMN is required as a cofactor.

It localises to the cell membrane. It catalyses the reaction (S)-dihydroorotate + a quinone = orotate + a quinol. It functions in the pathway pyrimidine metabolism; UMP biosynthesis via de novo pathway; orotate from (S)-dihydroorotate (quinone route): step 1/1. Its function is as follows. Catalyzes the conversion of dihydroorotate to orotate with quinone as electron acceptor. In Mycobacterium ulcerans (strain Agy99), this protein is Dihydroorotate dehydrogenase (quinone).